The chain runs to 222 residues: MIRFEHVSKAYLGGRQALQGVTFHMQPGEMAFLTGHSGAGKSTLLKLICGIERPSAGKIWFSGHDITRLKNREVPFLRRQIGMIFQDHHLLMDRTVYDNVAIPLIIAGASGDDIRRRVSAALDKVGLLDKAKNFPIQLSGGEQQRVGIARAVVNKPAVLLADEPTGNLDDALSEGILRLFEEFNRVGVTVLMATHDINLISRRSYRMLTLSDGHLHGGVGHE.

The 221-residue stretch at 2–222 (IRFEHVSKAY…GHLHGGVGHE (221 aa)) folds into the ABC transporter domain. Residue 35–42 (GHSGAGKS) coordinates ATP.

The protein belongs to the ABC transporter superfamily. In terms of assembly, homodimer. Forms a membrane-associated complex with FtsX.

It is found in the cell inner membrane. Its function is as follows. Part of the ABC transporter FtsEX involved in cellular division. Important for assembly or stability of the septal ring. In Escherichia coli O157:H7, this protein is Cell division ATP-binding protein FtsE (ftsE).